Here is a 280-residue protein sequence, read N- to C-terminus: MSPYISLLKPRVIWLLILASVAGYIYGGGGVDSRLFSLLAVAFLSTGGSAAFNHYWERDIDALMTRTFKRPLPSGLITPNAALAYSLALSATGISLGFLLLGLLPGLFVLLGWLFYAVVYTIVLKRRTWLNIFGGGFAGNAVFLGGYALAKGTVDLPAVLISFAIYLWTPSHIWALAFKYRGDYKRAGVPMLPALIKEERAVAVISAINAAAAAYILWLYLQFGGGAGGAIVALGVAATIATSIYAAVKKTEEAMWKMYKASSPMLTLFLIALMIQRYRL.

A run of 9 helical transmembrane segments spans residues 12-32 (VIWL…GGVD), 35-55 (LFSL…FNHY), 76-96 (LITP…GISL), 98-118 (FLLL…FYAV), 129-149 (WLNI…GYAL), 158-178 (AVLI…ALAF), 199-221 (ERAV…WLYL), 226-248 (GAGG…YAAV), and 255-275 (MWKM…ALMI).

Belongs to the UbiA prenyltransferase family. Protoheme IX farnesyltransferase subfamily.

Its subcellular location is the cell membrane. The enzyme catalyses heme b + (2E,6E)-farnesyl diphosphate + H2O = Fe(II)-heme o + diphosphate. The protein operates within porphyrin-containing compound metabolism; heme O biosynthesis; heme O from protoheme: step 1/1. Converts heme B (protoheme IX) to heme O by substitution of the vinyl group on carbon 2 of heme B porphyrin ring with a hydroxyethyl farnesyl side group. This Pyrobaculum aerophilum (strain ATCC 51768 / DSM 7523 / JCM 9630 / CIP 104966 / NBRC 100827 / IM2) protein is Protoheme IX farnesyltransferase 2.